A 456-amino-acid polypeptide reads, in one-letter code: Phosphomannomutase (456 aa).

Catalysis depends on Ser98, which acts as the Phosphoserine intermediate. Residues Ser98, Asp246, Asp248, and Asp250 each coordinate Mg(2+).

Belongs to the phosphohexose mutase family. Mg(2+) serves as cofactor.

It carries out the reaction alpha-D-mannose 1-phosphate = D-mannose 6-phosphate. The protein operates within nucleotide-sugar biosynthesis; GDP-alpha-D-mannose biosynthesis; alpha-D-mannose 1-phosphate from D-fructose 6-phosphate: step 2/2. It functions in the pathway bacterial outer membrane biogenesis; LPS O-antigen biosynthesis. Involved in GDP-mannose biosynthesis which serves as the activated sugar nucleotide precursor for mannose residues in cell surface polysaccharides. This enzyme participates in synthesis of the LPS O9 antigen. The protein is Phosphomannomutase (manB) of Escherichia coli.